Consider the following 29-residue polypeptide: Lambda-theraphotoxin-Ec2a (29 aa).

Cystine bridges form between C2–C16, C9–C21, and C15–C25.

The protein belongs to the neurotoxin 30 (phrixotoxin) family. As to expression, expressed by the venom gland.

Its subcellular location is the secreted. Its function is as follows. Insect-selective neurotoxin that potently blocks insect calcium-activated potassium (BKCa) channels (Slo-type) in cockroach dorsal unpaired median (DUM) neurons (IC(50)=3.7 nM). This occurs in the absence of any shifts in the voltage dependence of activation. At high concentrations (330 nM), it partially inhibits cockroach delayed-rectifier potassium channels (Kv) currents. May interact with the turret and/or loop region of the external entrance to the channel and does not project deeply into the pore of the channel. In vivo, does not show toxicity in mice after intracerebroventricular injection of up to 25 pmol/g (1.8 ug/20 g mouse). The sequence is that of Lambda-theraphotoxin-Ec2a from Eucratoscelus constrictus (African red-rump baboon spider).